Here is a 1209-residue protein sequence, read N- to C-terminus: Neural cell adhesion molecule L1-like protein (1209 aa).

Residues methionine 1 to alanine 25 form the signal peptide. Topologically, residues glutamate 26–tryptophan 1083 are extracellular. 2 consecutive Ig-like C2-type domains span residues proline 35–glutamate 124 and proline 128–threonine 223. Cystine bridges form between cysteine 57/cysteine 109 and cysteine 153/cysteine 204. Asparagine 87 is a glycosylation site (N-linked (GlcNAc...) asparagine). Asparagine 225 and asparagine 299 each carry an N-linked (GlcNAc...) asparagine glycan. 4 consecutive Ig-like C2-type domains span residues proline 235–glutamate 328, proline 331–aspartate 417, proline 423–aspartate 510, and threonine 515–threonine 607. Disulfide bonds link cysteine 262/cysteine 310, cysteine 352/cysteine 401, cysteine 445/cysteine 494, and cysteine 536/cysteine 591. Asparagine 476 carries N-linked (GlcNAc...) asparagine glycosylation. Positions aspartate 555–alanine 558 match the DGEA motif. Residues asparagine 562 and asparagine 580 are each glycosylated (N-linked (GlcNAc...) asparagine). 4 consecutive Fibronectin type-III domains span residues proline 614–alanine 709, asparagine 714–aspartate 807, alanine 812–glycine 914, and glutamine 918–glycine 1015. The tract at residues histidine 696–asparagine 717 is disordered. N-linked (GlcNAc...) asparagine glycans are attached at residues asparagine 767, asparagine 822, asparagine 945, and asparagine 1027. Residues phenylalanine 1084–valine 1104 form a helical membrane-spanning segment. Residues lysine 1105–alanine 1209 are Cytoplasmic-facing. Residues lysine 1115–threonine 1133 show a composition bias toward basic and acidic residues. The tract at residues lysine 1115–glutamate 1170 is disordered. Phosphoserine is present on residues serine 1148, serine 1161, and serine 1181. Over residues arginine 1150–alanine 1162 the composition is skewed to polar residues. The short motif at phenylalanine 1182–tyrosine 1186 is the FIG[AQ]Y element.

Belongs to the immunoglobulin superfamily. L1/neurofascin/NgCAM family. In terms of assembly, may interact with L1CAM. May interact with ITGB1/ITGA1 heterodimer and ITGB1/ITGA2 heterodimer as well as with ANK3. In terms of processing, cleavage by metalloprotease ADAM8 in the extracellular part generates 2 soluble forms (125 kDa and 165 kDa) in vitro and is inhibited by metalloprotease inhibitors. In brain extracts, these two soluble forms are also present and are dramatically reduced in mice lacking ADAM8. Cleaved by BACE1. Post-translationally, N-glycosylated. Contains N-linked oligosaccharides with a sulfated carbohydrate structure type HNK-1 (SO4-3-GlcUABeta1,3GalBeta1,4GlcNAc). O-glycosylated. As to expression, expressed in the brain, in the cerebellum and in the spinal cord. Detected in the retina and the optic nerve. Expressed in neurons and glial cells in the central nervous system and by Schwann cells in the peripheral nervous system.

The protein localises to the cell membrane. The protein resides in the secreted. Its subcellular location is the extracellular space. It is found in the extracellular matrix. Functionally, extracellular matrix and cell adhesion protein that plays a role in nervous system development and in synaptic plasticity. Both soluble and membranous forms promote neurite outgrowth of cerebellar and hippocampal neurons and suppress neuronal cell death. Plays a role in neuronal positioning of pyramidal neurons as well as in regulation of both the number of interneurons and the efficacy of GABAergic synapses. May play a role in regulating cell migration in nerve regeneration and cortical development. Potentiates integrin-dependent cell migration towards extracellular matrix proteins. Recruits ANK3 to the plasma membrane. In Mus musculus (Mouse), this protein is Neural cell adhesion molecule L1-like protein (Chl1).